A 413-amino-acid chain; its full sequence is Corticotropin-releasing factor receptor 2 (413 aa).

The segment at residues 1–22 is a signal peptide (not cleaved); it reads MDSTIFEIIIDEFDANCSLLDA. Residues 1-110 are Extracellular-facing; sequence MDSTIFEIII…CVPILDNKRK (110 aa). The N-linked (GlcNAc...) asparagine glycan is linked to asparagine 16. Intrachain disulfides connect cysteine 17-cysteine 53, cysteine 43-cysteine 86, and cysteine 67-cysteine 101. N-linked (GlcNAc...) asparagine glycans are attached at residues asparagine 77, asparagine 89, and asparagine 97. Residues 111–141 traverse the membrane as a helical segment; sequence YALHYKIALIINYLGHCISILALVIAFLLFL. At 142 to 148 the chain is on the cytoplasmic side; sequence CLRSIRC. A helical membrane pass occupies residues 149–173; the sequence is LRNIIHWNLITTFILRNIMWFLLQM. Over 174-187 the chain is Extracellular; that stretch reads IDHNIHESNEVWCR. An intrachain disulfide couples cysteine 186 to cysteine 256. A helical transmembrane segment spans residues 188-216; sequence CITTIYNYFVVTNFFWMFVEGCYLHTAIV. Topologically, residues 217 to 223 are cytoplasmic; it reads MTYSTDK. The chain crosses the membrane as a helical span at residues 224–251; the sequence is LRKWVFLFIGWCIPSPIIVTWAICKLFY. The Extracellular portion of the chain corresponds to 252 to 267; sequence ENEQCWIGKEPGKYID. The helical transmembrane segment at 268 to 293 threads the bilayer; sequence YIYQGRVILVLLINFVFLFNIVRILM. Residues 294-304 are Cytoplasmic-facing; the sequence is TKLRASTTSET. A helical transmembrane segment spans residues 305–329; sequence IQYRKAVKATLVLLPLLGITYMLFF. Topologically, residues 330–336 are extracellular; the sequence is VNPGEDD. The helical transmembrane segment at 337-366 threads the bilayer; the sequence is VSQIVFIYFNSFLQSFQGFFVSVFYCFLNG. At 367 to 413 the chain is on the cytoplasmic side; that stretch reads EVRSAARKRWHRWQDHHSLRVRVARAMSIPTSPTRISFHSIKQTAAV.

Belongs to the G-protein coupled receptor 2 family. Post-translationally, a N-glycosylation site within the signal peptide impedes its proper cleavage and function.

Its subcellular location is the cell membrane. Its function is as follows. G-protein coupled receptor for CRH (corticotropin-releasing factor), UCN (urocortin), UCN2 and UCN3. Has high affinity for UCN. Ligand binding causes a conformation change that triggers signaling via guanine nucleotide-binding proteins (G proteins) and down-stream effectors, such as adenylate cyclase. Promotes the activation of adenylate cyclase, leading to increased intracellular cAMP levels. The polypeptide is Corticotropin-releasing factor receptor 2 (crhr2) (Xenopus laevis (African clawed frog)).